A 438-amino-acid polypeptide reads, in one-letter code: MKYFKDIPEVKYEGPQSDNPFAFKYYNPDEIIDGKPLKDHLRFAIAYWHTFCATGSDPFGQPTIVRPWDKFSNRMDNAKARVEAAFEFFELLDVPFFCFHDRDIAPEGENLKESNKNLDEIVSLIKEYLKTSKTKVLWGTANLFSHPRYVHGAATSCNADVFAYAAAQVKKALEVTKELGGENYVFWGGREGYETLLNTDMGLELDNLARFLHMAVEYAKEIGFDGQFLIEPKPKEPTKHQYDFDSAHVYGFLKKYDLDKYFKLNIEVNHATLAGHDFHHELRFARINNMLGSIDANMGDLLLGWDTDQFPTDVRLTTLAMYEVIKAGGFDKGGLNFDAKVRRGSFELEDLVIGHIAGMDAFAKGFKIAYKLVKDGVFDKFIDERYKSYKEGIGAKIVSGEANFKMLEEYALSLDKIENKSGKQELLEMILNKYMFSE.

Mg(2+)-binding residues include aspartate 306 and aspartate 308.

Belongs to the xylose isomerase family. Homotetramer. Mg(2+) is required as a cofactor.

It localises to the cytoplasm. It carries out the reaction alpha-D-xylose = alpha-D-xylulofuranose. This Caldicellulosiruptor bescii (strain ATCC BAA-1888 / DSM 6725 / KCTC 15123 / Z-1320) (Anaerocellum thermophilum) protein is Xylose isomerase.